A 451-amino-acid polypeptide reads, in one-letter code: Opioid growth factor receptor-like protein 1 (451 aa).

Disordered stretches follow at residues 1-89 (MGNL…TAKP) and 308-451 (ENFI…VLVQ). Positions 43 to 66 (PGQESEQPAQPPEQAGGRPGASPA) are enriched in low complexity. Residues 322-341 (GSKAQKMSSPLASSHNSQTS) show a composition bias toward polar residues. 2 stretches are compositionally biased toward basic and acidic residues: residues 362-381 (TAEDKKVAPKEPVEETDRPS) and 389-399 (AKPRNTEKDSN). Positions 431 to 443 (NDNQDNENPGNTN) are enriched in low complexity.

This sequence belongs to the opioid growth factor receptor family. As to expression, ubiquitous.

The polypeptide is Opioid growth factor receptor-like protein 1 (OGFRL1) (Homo sapiens (Human)).